A 419-amino-acid chain; its full sequence is MQTFLKGKRVGYWLSEKKVKKLNFQAFAELCRKRGIEVVQLNLSRPIEEQGPLDVIIHKLTDVILEADQNDSQSLELVHRFQEYIDAHPETIVLDPLPAIRTLLDRSKSYELIRKIEAYMKDDRICSPPFMELTSLCGEDTMRLLEQNGLAFPFICKTRVAHGTNSHEMAIVFNQEGLNAIQPPCVVQNFINHNAVLYKVFVVGESYTVVQRPSLKNFSAGTSDRESIFFNSHNVSKPESSSVLTELDKIEGVFERPSDEVIRELSRALRQALGVSLFGIDIIINNQTGQHAVIDVNAFPGYEGVSEFFTDLLNHIATVLQGQSTGGAATEEVAPLRHNRLLAEPAGSLAGERTCSASPGCCGSMKGQDTPWKTETEAGNMGAGASAKLPHQRLGCTTGVSPSFQQHCVASLATKASSQ.

A 1D-myo-inositol 1,3,4-trisphosphate-binding site is contributed by Lys18. Residues Arg106 and Lys157 each coordinate ATP. The ATP-grasp domain maps to 117-334 (EAYMKDDRIC…TGGAATEEVA (218 aa)). 1D-myo-inositol 1,3,4-trisphosphate contacts are provided by His167 and Lys199. ATP is bound by residues 188–199 (QNFINHNAVLYK), Ser214, Ser232, and Ser236. Residues Asp281, Asp295, and Asn297 each contribute to the Mg(2+) site. Asn297 is a 1D-myo-inositol 1,3,4-trisphosphate binding site. An N6-acetyllysine; by EP300 and CREBBP modification is found at Lys388. Phosphoserine is present on Ser401. Lys415 is subject to N6-acetyllysine; by EP300 and CREBBP.

Belongs to the ITPK1 family. As to quaternary structure, monomer. Interacts with GPS1/COPS1. It depends on Mg(2+) as a cofactor. Post-translationally, acetylation by EP300 and CREBBP destabilizes ITPK1, and down-regulates enzymatic activity. Deacetylated by SIRT1.

The catalysed reaction is 1D-myo-inositol 3,4,5,6-tetrakisphosphate + ATP = 1D-myo-inositol 1,3,4,5,6-pentakisphosphate + ADP + H(+). It catalyses the reaction 1D-myo-inositol 1,3,4-trisphosphate + ATP = 1D-myo-inositol 1,3,4,5-tetrakisphosphate + ADP + H(+). It carries out the reaction 1D-myo-inositol 1,3,4-trisphosphate + ATP = 1D-myo-inositol 1,3,4,6-tetrakisphosphate + ADP + H(+). The enzyme catalyses 1D-myo-inositol 3,4,6-trisphosphate + ATP = 1D-myo-inositol 1,3,4,6-tetrakisphosphate + ADP + H(+). The catalysed reaction is 1D-myo-inositol 1,3,4-trisphosphate + 1D-myo-inositol 1,3,4,5,6-pentakisphosphate = 1D-myo-inositol 3,4,5,6-tetrakisphosphate + 1D-myo-inositol 1,3,4,6-tetrakisphosphate. It catalyses the reaction 1D-myo-inositol 1,3,4-trisphosphate + 1D-myo-inositol 1,3,4,5,6-pentakisphosphate = 1D-myo-inositol 3,4,5,6-tetrakisphosphate + 1D-myo-inositol 1,3,4,5-tetrakisphosphate. Kinase that can phosphorylate various inositol polyphosphate such as Ins(3,4,5,6)P4 or Ins(1,3,4)P3. Phosphorylates Ins(3,4,5,6)P4 at position 1 to form Ins(1,3,4,5,6)P5. This reaction is thought to have regulatory importance, since Ins(3,4,5,6)P4 is an inhibitor of plasma membrane Ca(2+)-activated Cl(-) channels, while Ins(1,3,4,5,6)P5 is not. Also phosphorylates Ins(1,3,4)P3 on O-5 and O-6 to form Ins(1,3,4,6)P4, an essential molecule in the hexakisphosphate (InsP6) pathway. Also acts as an inositol polyphosphate phosphatase that dephosphorylates Ins(1,3,4,5)P4 and Ins(1,3,4,6)P4 to Ins(1,3,4)P3, and Ins(1,3,4,5,6)P5 to Ins(3,4,5,6)P4. May also act as an isomerase that interconverts the inositol tetrakisphosphate isomers Ins(1,3,4,5)P4 and Ins(1,3,4,6)P4 in the presence of ADP and magnesium. Probably acts as the rate-limiting enzyme of the InsP6 pathway. Modifies TNF-alpha-induced apoptosis by interfering with the activation of TNFRSF1A-associated death domain. Plays an important role in MLKL-mediated necroptosis. Produces highly phosphorylated inositol phosphates such as inositolhexakisphosphate (InsP6) which bind to MLKL mediating the release of an N-terminal auto-inhibitory region leading to its activation. Essential for activated phospho-MLKL to oligomerize and localize to the cell membrane during necroptosis. The sequence is that of Inositol-tetrakisphosphate 1-kinase from Mus musculus (Mouse).